The chain runs to 1082 residues: Sodium/potassium exporting P-type ATPase 2 (1082 aa).

Residues 1-75 (MSSINTNVAE…GANTLGDGDK (75 aa)) are Cytoplasmic-facing. A helical membrane pass occupies residues 76-96 (ISLTKIIAHQVCNAMILVLII). Over 97–98 (SM) the chain is Extracellular. Residues 99–119 (VIALAIKDWISGGVIGFVVLI) form a helical membrane-spanning segment. The Cytoplasmic portion of the chain corresponds to 120–308 (NISVGFVQEY…VGTPLQRKLS (189 aa)). A helical membrane pass occupies residues 309–329 (WLAIFLFWGCRYFCNYCNGIP). Residues 330-336 (KNRVNKE) are Extracellular-facing. The chain crosses the membrane as a helical span at residues 337–357 (VAIYAICVALSMIPSALIVVL). Over 358 to 807 (TITMAVGAQV…RMSSNIQKFV (450 aa)) the chain is Cytoplasmic. The active-site 4-aspartylphosphate intermediate is Asp-393. Positions 393 and 395 each coordinate Mg(2+). ATP is bound by residues Thr-395, Glu-499, Lys-552, Arg-604, Thr-664, Gly-665, Asp-666, Arg-723, and Lys-729. Residue Asp-748 coordinates Mg(2+). Asn-751 contributes to the ATP binding site. The chain crosses the membrane as a helical span at residues 808–828 (LQLLAENVAQALYLMVGLAFI). At 829–832 (DDSG) the chain is on the extracellular side. Residues 833–853 (LSVFPLSPVEVLWILVVTSCF) form a helical membrane-spanning segment. The Cytoplasmic portion of the chain corresponds to 854 to 884 (PAMDLGQERASDDILEESPNSTIFTWEVIID). The chain crosses the membrane as a helical span at residues 885 to 905 (MIVYGFWMAVCCLVCFVIIVY). Residues 906–935 (GEGDPYLGVNCNKSSSSNSDVCELVFRGRS) are Extracellular-facing. The chain crosses the membrane as a helical span at residues 936–956 (ASFATMTWCALILAWECIHPY). The Cytoplasmic portion of the chain corresponds to 957–983 (NSLFYMRQDTDHPWWKQTVIDLWDNQF). Residues 984–1004 (LFWSVAIGFISVFPVVYIPVI) form a helical membrane-spanning segment. Topologically, residues 1005–1007 (NTK) are extracellular. Residues 1008–1028 (VFLHGPIGYEWGLAVGFSILF) traverse the membrane as a helical segment. At 1029 to 1082 (LAGSELWKWIKRIHKRKANKKAKNPEYELERSDPFKKYASFSRSNTMDRPELMV) the chain is on the cytoplasmic side.

The protein belongs to the cation transport ATPase (P-type) (TC 3.A.3) family. Type IID subfamily. It depends on Mg(2+) as a cofactor. Post-translationally, the active site is phosphorylated in presence of sodium or potassium and in conditions of higher pH. Not phosphorylated in presence of calcium ions.

Its subcellular location is the cell membrane. It carries out the reaction Na(+)(in) + ATP + H2O = Na(+)(out) + ADP + phosphate + H(+). The catalysed reaction is K(+)(in) + ATP + H2O = K(+)(out) + ADP + phosphate + H(+). Catalyzes the hydrolysis of ATP coupled with the export of sodium and potassium from the cell. May be an inefficient sodium exporter. May transport other cations such as lithium. Sodium/potassium efflux ATPases are involved in salt tolerance and maintaining the membrane potential across the plasma membrane in high salinity (Na+) or alkaline (K+) environments. The chain is Sodium/potassium exporting P-type ATPase 2 from Schwanniomyces occidentalis (Yeast).